Consider the following 481-residue polypeptide: Sphingosine kinase 2 (481 aa).

One can recognise a DAGKc domain in the interval 111–253 (GRPKRLLVFV…VDVATIAQGN (143 aa)). ATP contacts are provided by residues 121-123 (NPF) and threonine 153. 178–181 (SGDG) contributes to the substrate binding site. Catalysis depends on aspartate 180, which acts as the Proton donor/acceptor. ATP is bound by residues glutamate 185 and 210–212 (GTG). Aspartate 271 provides a ligand contact to substrate. Residues arginine 278, arginine 284, and 441–443 (DGE) contribute to the ATP site.

Mg(2+) serves as cofactor. As to expression, highly expressed in flowers and siliques and at lower levels in roots, leaves and stems.

Its subcellular location is the vacuole membrane. It carries out the reaction a sphingoid base + ATP = a sphingoid 1-phosphate + ADP + H(+). Its activity is regulated as follows. Activated by phosphatidic acid (PA). Binding with PA stimulates the activity by promoting the binding of substrate to the catalytic site. Involved in the production of sphingolipid metabolites. Phosphorylates sphingosine and various l sphingoid long-chain base (LCB) products, such as phytosphingosine (PHS, 4-hydroxysphinganine), 4-hydroxy-8-sphingenine, 4,8-sphingadienine and D-erythro-dihydrosphingosine, but has a very few activity toward D,L-threo- dihydrosphingosine. Is required for abscisic acid (ABA) signaling that mediates stomatal closure, inhibition of seed germination and root elongation. May function upstream of PLDALPHA1 and phosphatidic acid (PA) in an amplification response to ABA that mediates stomatal closure. This chain is Sphingosine kinase 2 (SPHK2), found in Arabidopsis thaliana (Mouse-ear cress).